The following is a 428-amino-acid chain: Histone deacetylase 3 (428 aa).

Residues 3–316 (NRTAYFYDPD…WTFETSLLVE (314 aa)) are histone deacetylase. The 1D-myo-inositol 1,4,5,6-tetrakisphosphate site is built by His17, Gly21, and Lys25. His135 is an active-site residue. Residues Asp170, His172, and Asp259 each coordinate Zn(2+). Arg265 provides a ligand contact to 1D-myo-inositol 1,4,5,6-tetrakisphosphate. Positions 381 to 428 (PSDLLSYERPDEADPEERGSEENFSRPEAANEFYDGDHDHDKESDVEI) are disordered. Composition is skewed to basic and acidic residues over residues 386-405 (SYER…ENFS) and 415-428 (DGDH…DVEI).

Belongs to the histone deacetylase family. HD type 1 subfamily.

Its subcellular location is the nucleus. It is found in the chromosome. The protein localises to the cytoplasm. The protein resides in the cytosol. The enzyme catalyses N(6)-acetyl-L-lysyl-[histone] + H2O = L-lysyl-[histone] + acetate. The catalysed reaction is N(6)-acetyl-L-lysyl-[protein] + H2O = L-lysyl-[protein] + acetate. It catalyses the reaction N(6)-(2E)-butenoyl-L-lysyl-[protein] + H2O = (2E)-2-butenoate + L-lysyl-[protein]. It carries out the reaction N(6)-(2-hydroxyisobutanoyl)-L-lysyl-[protein] + H2O = 2-hydroxy-2-methylpropanoate + L-lysyl-[protein]. The enzyme catalyses N(6)-[(S)-lactoyl]-L-lysyl-[protein] + H2O = (S)-lactate + L-lysyl-[protein]. Inositol tetraphosphate (1D-myo-inositol 1,4,5,6-tetrakisphosphate) promotes the histone deacetylase activity by acting as an intermolecular glue between hdac3 and N-Cor repressor complex components. In terms of biological role, histone deacetylase that catalyzes the deacetylation of lysine residues on the N-terminal part of the core histones (H2A, H2B, H3 and H4), and some other non-histone substrates. Histone deacetylation gives a tag for epigenetic repression and plays an important role in transcriptional regulation, cell cycle progression and developmental events. Histone deacetylases act via the formation of large multiprotein complexes, such as N-Cor repressor complex, which activate the histone deacetylase activity. Participates in the BCL6 transcriptional repressor activity by deacetylating the H3 'Lys-27' (H3K27) on enhancer elements, antagonizing EP300 acetyltransferase activity and repressing proximal gene expression. Also functions as a deacetylase for non-histone targets. In addition to protein deacetylase activity, also acts as a protein-lysine deacylase by recognizing other acyl groups: catalyzes removal of (2E)-butenoyl (crotonyl), lactoyl (lactyl) and 2-hydroxyisobutanoyl (2-hydroxyisobutyryl) acyl groups from lysine residues, leading to protein decrotonylation, delactylation and de-2-hydroxyisobutyrylation, respectively. In Danio rerio (Zebrafish), this protein is Histone deacetylase 3 (hdac3).